The following is a 382-amino-acid chain: Succinyl-diaminopimelate desuccinylase (382 aa).

H70 lines the Zn(2+) pocket. D72 is a catalytic residue. D103 contributes to the Zn(2+) binding site. E137 acts as the Proton acceptor in catalysis. E138, E166, and H355 together coordinate Zn(2+).

Belongs to the peptidase M20A family. DapE subfamily. In terms of assembly, homodimer. It depends on Zn(2+) as a cofactor. The cofactor is Co(2+).

The enzyme catalyses N-succinyl-(2S,6S)-2,6-diaminopimelate + H2O = (2S,6S)-2,6-diaminopimelate + succinate. The protein operates within amino-acid biosynthesis; L-lysine biosynthesis via DAP pathway; LL-2,6-diaminopimelate from (S)-tetrahydrodipicolinate (succinylase route): step 3/3. In terms of biological role, catalyzes the hydrolysis of N-succinyl-L,L-diaminopimelic acid (SDAP), forming succinate and LL-2,6-diaminopimelate (DAP), an intermediate involved in the bacterial biosynthesis of lysine and meso-diaminopimelic acid, an essential component of bacterial cell walls. This Paracoccus denitrificans (strain Pd 1222) protein is Succinyl-diaminopimelate desuccinylase.